A 357-amino-acid chain; its full sequence is MSNSIDSQSIPTISPTDYTKFDPDTIHEKLDASLSRPQLNTDGSIRHFLGIEGLNKAQLRAIIAKAETFFDDKGQLINRPELEGYTVMNLFFEPSTRTRTTFEVAEKRLGANVLNIDIERSSTKKGESLRDTLWNLQAMTADIFVVRHSASGAAHFMATEVTPDIAIINGGDGWHAHPTQGMLDMLTIHREAPRPFEELSVAIVGDIKHSRVARSDISALQTLGVKDIRVCAPRTLLPKGIERFGVQVYENMNECVTDCDVIMGLRIQNERIGSPLLASSSEYYKHYGITPERMALAKPDAFVMHPGPMNRGVEIASSVADGAQSVILKQVNNGIAIRMAVLSLAMEGQRAHQAAGN.

Polar residues predominate over residues 1 to 17 (MSNSIDSQSIPTISPTD). Positions 1 to 21 (MSNSIDSQSIPTISPTDYTKF) are disordered. Residues Arg97 and Thr98 each coordinate carbamoyl phosphate. Residue Lys125 participates in L-aspartate binding. Carbamoyl phosphate is bound by residues Arg147, His177, and Gln180. 2 residues coordinate L-aspartate: Arg211 and Arg266. Gly307 and Pro308 together coordinate carbamoyl phosphate.

This sequence belongs to the aspartate/ornithine carbamoyltransferase superfamily. ATCase family. Heterododecamer (2C3:3R2) of six catalytic PyrB chains organized as two trimers (C3), and six regulatory PyrI chains organized as three dimers (R2).

It carries out the reaction carbamoyl phosphate + L-aspartate = N-carbamoyl-L-aspartate + phosphate + H(+). It participates in pyrimidine metabolism; UMP biosynthesis via de novo pathway; (S)-dihydroorotate from bicarbonate: step 2/3. In terms of biological role, catalyzes the condensation of carbamoyl phosphate and aspartate to form carbamoyl aspartate and inorganic phosphate, the committed step in the de novo pyrimidine nucleotide biosynthesis pathway. The polypeptide is Aspartate carbamoyltransferase catalytic subunit (Psychrobacter arcticus (strain DSM 17307 / VKM B-2377 / 273-4)).